The following is a 229-amino-acid chain: Uracil-DNA glycosylase (229 aa).

Residue Asp65 is the Proton acceptor of the active site.

The protein belongs to the uracil-DNA glycosylase (UDG) superfamily. UNG family.

Its subcellular location is the cytoplasm. It carries out the reaction Hydrolyzes single-stranded DNA or mismatched double-stranded DNA and polynucleotides, releasing free uracil.. In terms of biological role, excises uracil residues from the DNA which can arise as a result of misincorporation of dUMP residues by DNA polymerase or due to deamination of cytosine. In Latilactobacillus sakei subsp. sakei (strain 23K) (Lactobacillus sakei subsp. sakei), this protein is Uracil-DNA glycosylase.